The following is an 80-amino-acid chain: uncharacterized protein (80 aa).

The first 23 residues, 1–23 (MKWNNMLKAAGIAVLLFSVFAYA), serve as a signal peptide directing secretion.

This is an uncharacterized protein from Bacillus subtilis (strain 168).